The chain runs to 595 residues: MSLFRTYVRVLSYLNQEKNAFLLICTANITLAIITIAEPILFGHVIDTIADKSDTLVTLAVWMCFGISNIIAYVLVARGADRLAHRCRLTVLEKSFARIISMPLIWHQQRGTSHALHTLLRATDSMSSIWLEFMRQHLSTFVALFVLVPVTFKMNWRLSIVLMVLAILYILIARLVMQKTKNGQAAVEHYHHNLFKHITDSISNVSIVQSYNRITEETSALHQHTNNLLSAQTPVLNWWALASGLNRMASTISIVCVLLLGAFFVIKGQLSVGEVVTFVGFSQLMIGRLDQISGFINLAVSSQAKLQEFFDMEDSTFQTNEPANLPSLPNVKGAIQFHHVTYEFPNSSQGVFDISFEVKAGQTVAIVGPTGAGKTTLINLLQRVYDPTVGYISIDGININSINRESLRKALATVFQDAGLFDRTIRDNISIGKTGATDEELYEATKTASAHDFILKKSKNYDTLVGERGSQLSGGERQRLAIARAILKNAPILILDEATSALDVETEIRVKNAIDCISQNRTTFIIAHRLSTIRNADLVLFLDQGRLIEKGSFQELINKDGHFYKLLKRGGLTINQPATKEKDDNIIPLRKAMAL.

The next 5 membrane-spanning stretches (helical) occupy residues 21–41, 56–76, 129–149, 158–178, and 252–272; these read FLLI…EPIL, LVTL…YVLV, IWLE…VLVP, LSIV…LVMQ, and ISIV…QLSV. Residues 21–301 enclose the ABC transmembrane type-1 domain; the sequence is FLLICTANIT…ISGFINLAVS (281 aa). The ABC transporter domain maps to 335–569; it reads IQFHHVTYEF…DGHFYKLLKR (235 aa). 368–375 contacts ATP; that stretch reads GPTGAGKT.

Belongs to the ABC transporter superfamily. Beta-(1--&gt;2)glucan exporter (TC 3.A.1.108.1) family. In terms of assembly, homodimer.

The protein resides in the cell inner membrane. It carries out the reaction [(1-&gt;2)-beta-D-glucosyl](n)(in) + ATP + H2O = [(1-&gt;2)-beta-D-glucosyl](n)(out) + ADP + phosphate + H(+). Its function is as follows. Involved in beta-(1--&gt;2)glucan export. Transmembrane domains (TMD) form a pore in the inner membrane and the ATP-binding domain (NBD) is responsible for energy generation. The chain is Beta-(1--&gt;2)glucan export ATP-binding/permease protein NdvA from Bartonella bacilliformis.